The following is a 652-amino-acid chain: DNA ligase (652 aa).

Residues 29–33, 78–79, and glutamate 107 each bind NAD(+); these read DSEYD and SL. Residue lysine 109 is the N6-AMP-lysine intermediate of the active site. Arginine 130, glutamate 164, lysine 278, and lysine 302 together coordinate NAD(+). Cysteine 395, cysteine 398, cysteine 413, and cysteine 418 together coordinate Zn(2+). In terms of domain architecture, BRCT spans 577–652; the sequence is AADAVLSGKT…IQDEAWLEQL (76 aa).

Belongs to the NAD-dependent DNA ligase family. LigA subfamily. It depends on Mg(2+) as a cofactor. The cofactor is Mn(2+).

It catalyses the reaction NAD(+) + (deoxyribonucleotide)n-3'-hydroxyl + 5'-phospho-(deoxyribonucleotide)m = (deoxyribonucleotide)n+m + AMP + beta-nicotinamide D-nucleotide.. Its function is as follows. DNA ligase that catalyzes the formation of phosphodiester linkages between 5'-phosphoryl and 3'-hydroxyl groups in double-stranded DNA using NAD as a coenzyme and as the energy source for the reaction. It is essential for DNA replication and repair of damaged DNA. This is DNA ligase from Streptococcus gordonii (strain Challis / ATCC 35105 / BCRC 15272 / CH1 / DL1 / V288).